The sequence spans 91 residues: Protein LURE 1.6 (91 aa).

Positions 1–20 (MKLPFIFLITLLIFVSSCTS) are cleaved as a signal peptide. Intrachain disulfides connect cysteine 59–cysteine 76, cysteine 62–cysteine 83, and cysteine 66–cysteine 85.

It belongs to the DEFL family. As to expression, expressed in the pistil. Detected in the synergid cells.

Its subcellular location is the secreted. Functionally, pollen tube attractants guiding pollen tubes to the ovular micropyle. This Arabidopsis thaliana (Mouse-ear cress) protein is Protein LURE 1.6.